The primary structure comprises 141 residues: Large ribosomal subunit protein uL11 (141 aa).

It belongs to the universal ribosomal protein uL11 family. In terms of assembly, part of the ribosomal stalk of the 50S ribosomal subunit. Interacts with L10 and the large rRNA to form the base of the stalk. L10 forms an elongated spine to which L12 dimers bind in a sequential fashion forming a multimeric L10(L12)X complex. In terms of processing, one or more lysine residues are methylated.

Forms part of the ribosomal stalk which helps the ribosome interact with GTP-bound translation factors. This chain is Large ribosomal subunit protein uL11, found in Chloroflexus aurantiacus (strain ATCC 29366 / DSM 635 / J-10-fl).